The chain runs to 327 residues: NADPH-dependent aldose reductase GRE3 (327 aa).

The Proton donor role is filled by Tyr49. Residue His111 coordinates substrate. 219-286 contributes to the NADP(+) binding site; sequence SSFGPQSFIE…SSKKERLLGN (68 aa).

Belongs to the aldo/keto reductase family. In terms of assembly, monomer.

The protein resides in the cytoplasm. The protein localises to the nucleus. The catalysed reaction is an alditol + NAD(+) = an aldose + NADH + H(+). It carries out the reaction an alditol + NADP(+) = an aldose + NADPH + H(+). Aldose reductase with a broad substrate specificity. Reduces the cytotoxic compound methylglyoxal (MG) to acetol and (R)-lactaldehyde under stress conditions. MG is synthesized via a bypath of glycolysis from dihydroxyacetone phosphate and is believed to play a role in cell cycle regulation and stress adaptation. In pentose-fermenting yeasts, aldose reductase catalyzes the reduction of xylose into xylitol. The purified enzyme catalyzes this reaction, but the inability of S.cerevisiae to grow on xylose as sole carbon source indicates that the physiological function is more likely methylglyoxal reduction. In Saccharomyces cerevisiae (strain ATCC 204508 / S288c) (Baker's yeast), this protein is NADPH-dependent aldose reductase GRE3.